Consider the following 455-residue polypeptide: Glutamyl-tRNA(Gln) amidotransferase subunit A (455 aa).

Active-site charge relay system residues include K74 and S149. The Acyl-ester intermediate role is filled by S173.

It belongs to the amidase family. GatA subfamily. As to quaternary structure, heterotrimer of A, B and C subunits.

It carries out the reaction L-glutamyl-tRNA(Gln) + L-glutamine + ATP + H2O = L-glutaminyl-tRNA(Gln) + L-glutamate + ADP + phosphate + H(+). Allows the formation of correctly charged Gln-tRNA(Gln) through the transamidation of misacylated Glu-tRNA(Gln) in organisms which lack glutaminyl-tRNA synthetase. The reaction takes place in the presence of glutamine and ATP through an activated gamma-phospho-Glu-tRNA(Gln). The polypeptide is Glutamyl-tRNA(Gln) amidotransferase subunit A (Methanosphaera stadtmanae (strain ATCC 43021 / DSM 3091 / JCM 11832 / MCB-3)).